We begin with the raw amino-acid sequence, 433 residues long: Phosphoglycerate kinase, chloroplastic (433 aa).

A chloroplast-targeting transit peptide spans G1–S28. Residues A51, D52, N54, R68, S90, H91, G93, R94, R149, H181, and R182 each contribute to the (2R)-3-phosphoglycerate site. An ADP-binding site is contributed by G227. G227 provides a ligand contact to CDP. AMP is bound by residues K229 and K233. K233 is an ATP binding site. G251 serves as a coordination point for ADP. Position 251 (G251) interacts with CDP. AMP-binding residues include G252 and G324. ATP contacts are provided by G252 and G324. 2 residues coordinate CDP: G349 and F354. An ADP-binding site is contributed by F354. E355 serves as a coordination point for AMP. Residues E355, D386, and S387 each contribute to the ATP site. D386 is a binding site for Mg(2+).

This sequence belongs to the phosphoglycerate kinase family. As to quaternary structure, monomer. It depends on Mg(2+) as a cofactor.

The protein resides in the plastid. It localises to the chloroplast. It catalyses the reaction (2R)-3-phosphoglycerate + ATP = (2R)-3-phospho-glyceroyl phosphate + ADP. It participates in carbohydrate biosynthesis; Calvin cycle. This Spinacia oleracea (Spinach) protein is Phosphoglycerate kinase, chloroplastic.